We begin with the raw amino-acid sequence, 293 residues long: Ribosomal protein L11 methyltransferase (293 aa).

T145, G166, D188, and N230 together coordinate S-adenosyl-L-methionine.

This sequence belongs to the methyltransferase superfamily. PrmA family.

It is found in the cytoplasm. The enzyme catalyses L-lysyl-[protein] + 3 S-adenosyl-L-methionine = N(6),N(6),N(6)-trimethyl-L-lysyl-[protein] + 3 S-adenosyl-L-homocysteine + 3 H(+). In terms of biological role, methylates ribosomal protein L11. This Shewanella frigidimarina (strain NCIMB 400) protein is Ribosomal protein L11 methyltransferase.